The sequence spans 325 residues: MEGLGIVFLAAVVLLFVFLFFSFIPVGLWISAWAAGVRVPLLTLVAMRLRRVPPAKIIYPLIKATKAGLDVRLDRLEAHYLAGGNVDRVVDALIAADKAGIKLTFDRAAAIDLAGRDVLEAVRVSVNPKVIQTPMVAAVAKDGIQLLATARVTVRANIDRLVGGAGEETIIARVGEGIVTTIGSANSHKEVLENPDRISKTVLEKGLDAGTAFEILSVDIADVDVGKNIGAQLQIDQAEADKKIAQAKAEERRAMAVAAEQENRALVEAMRAKLVEAQAQVPLALAEALRKGHLGVMDYYRLKNIEADTDMRESISRAAKPEGEE.

The next 2 helical transmembrane spans lie at 4–24 (LGIV…FSFI) and 26–46 (VGLW…TLVA).

The protein belongs to the flotillin-like FloA family. In terms of assembly, homooligomerizes.

It is found in the cell membrane. The protein localises to the membrane raft. Its function is as follows. Found in functional membrane microdomains (FMM) that may be equivalent to eukaryotic membrane rafts. FMMs are highly dynamic and increase in number as cells age. Flotillins are thought to be important factors in membrane fluidity. The sequence is that of Flotillin-like protein FloA from Thermus thermophilus (strain ATCC BAA-163 / DSM 7039 / HB27).